A 463-amino-acid chain; its full sequence is L-seryl-tRNA(Sec) selenium transferase (463 aa).

N6-(pyridoxal phosphate)lysine is present on K295.

Belongs to the SelA family. As to quaternary structure, homodecamer; pentamer of dimers. Binds only one seryl-tRNA(Sec) per dimer. Pyridoxal 5'-phosphate serves as cofactor.

The protein resides in the cytoplasm. It catalyses the reaction L-seryl-tRNA(Sec) + selenophosphate + H(+) = L-selenocysteinyl-tRNA(Sec) + phosphate. It participates in aminoacyl-tRNA biosynthesis; selenocysteinyl-tRNA(Sec) biosynthesis; selenocysteinyl-tRNA(Sec) from L-seryl-tRNA(Sec) (bacterial route): step 1/1. In terms of biological role, converts seryl-tRNA(Sec) to selenocysteinyl-tRNA(Sec) required for selenoprotein biosynthesis. The sequence is that of L-seryl-tRNA(Sec) selenium transferase from Salmonella paratyphi B (strain ATCC BAA-1250 / SPB7).